The chain runs to 429 residues: Saccharopine dehydrogenase-like oxidoreductase (429 aa).

Position 2 is an N-acetylalanine (Ala2). Phosphoserine occurs at positions 209, 215, and 217.

It belongs to the saccharopine dehydrogenase family.

The protein is Saccharopine dehydrogenase-like oxidoreductase (Sccpdh) of Mus musculus (Mouse).